The primary structure comprises 943 residues: Protein translocase subunit SecA (943 aa).

Residues Gln90, 108 to 112 (GEGKT), and Asp509 each bind ATP. The tract at residues 535-562 (PDNEHKPPIPKQRNSKSKGGFSRKAGSN) is disordered.

Belongs to the SecA family. Monomer and homodimer. Part of the essential Sec protein translocation apparatus which comprises SecA, SecYEG and auxiliary proteins SecDF. Other proteins may also be involved.

The protein localises to the cell inner membrane. It localises to the cellular thylakoid membrane. The protein resides in the cytoplasm. It catalyses the reaction ATP + H2O + cellular proteinSide 1 = ADP + phosphate + cellular proteinSide 2.. Functionally, part of the Sec protein translocase complex. Interacts with the SecYEG preprotein conducting channel. Has a central role in coupling the hydrolysis of ATP to the transfer of proteins into and across the cell membrane, serving as an ATP-driven molecular motor driving the stepwise translocation of polypeptide chains across the membrane. In terms of biological role, probably participates in protein translocation into and across both the cytoplasmic and thylakoid membranes in cyanobacterial cells. This is Protein translocase subunit SecA from Prochlorococcus marinus (strain AS9601).